We begin with the raw amino-acid sequence, 216 residues long: Pyridoxine/pyridoxamine 5'-phosphate oxidase (216 aa).

Residues Arg-9–Tyr-12 and Arg-67 contribute to the substrate site. Residues Arg-62–Arg-67, Tyr-77–Thr-78, Lys-84, and Gln-106 contribute to the FMN site. Substrate is bound by residues Tyr-124, Arg-128, and Ser-132. FMN-binding positions include Gln-142–Ser-143 and Trp-188. Arg-194–His-196 is a binding site for substrate. Arg-198 contributes to the FMN binding site.

Belongs to the pyridoxamine 5'-phosphate oxidase family. In terms of assembly, homodimer. The cofactor is FMN.

The catalysed reaction is pyridoxamine 5'-phosphate + O2 + H2O = pyridoxal 5'-phosphate + H2O2 + NH4(+). It catalyses the reaction pyridoxine 5'-phosphate + O2 = pyridoxal 5'-phosphate + H2O2. It participates in cofactor metabolism; pyridoxal 5'-phosphate salvage; pyridoxal 5'-phosphate from pyridoxamine 5'-phosphate: step 1/1. The protein operates within cofactor metabolism; pyridoxal 5'-phosphate salvage; pyridoxal 5'-phosphate from pyridoxine 5'-phosphate: step 1/1. In terms of biological role, catalyzes the oxidation of either pyridoxine 5'-phosphate (PNP) or pyridoxamine 5'-phosphate (PMP) into pyridoxal 5'-phosphate (PLP). The polypeptide is Pyridoxine/pyridoxamine 5'-phosphate oxidase (Psychrobacter cryohalolentis (strain ATCC BAA-1226 / DSM 17306 / VKM B-2378 / K5)).